Here is a 157-residue protein sequence, read N- to C-terminus: Glucosamine 6-phosphate N-acetyltransferase 1 (157 aa).

Residues 9–157 (ISFRPLDIDD…SIYLPTPPKL (149 aa)) enclose the N-acetyltransferase domain. Residues Thr-31, 78–81 (KFIR), and 90–92 (EDI) each bind substrate. 100–105 (GKNLGL) lines the acetyl-CoA pocket. Residue 121–122 (YK) coordinates substrate. 135-137 (YEK) contributes to the acetyl-CoA binding site.

The protein belongs to the acetyltransferase family. GNA1 subfamily.

It catalyses the reaction D-glucosamine 6-phosphate + acetyl-CoA = N-acetyl-D-glucosamine 6-phosphate + CoA + H(+). It participates in nucleotide-sugar biosynthesis; UDP-N-acetyl-alpha-D-glucosamine biosynthesis; N-acetyl-alpha-D-glucosamine 1-phosphate from alpha-D-glucosamine 6-phosphate (route I): step 1/2. This is Glucosamine 6-phosphate N-acetyltransferase 1 (gna1) from Dictyostelium discoideum (Social amoeba).